The chain runs to 202 residues: PITH domain-containing protein 1 (202 aa).

Residues 11–184 form the PITH domain; sequence SHGVDDGIEY…IVNTVYESKP (174 aa).

This sequence belongs to the PITHD1 family.

The chain is PITH domain-containing protein 1 from Dictyostelium discoideum (Social amoeba).